The following is a 486-amino-acid chain: ATP synthase subunit beta (486 aa).

164–171 contributes to the ATP binding site; it reads GGAGVGKT.

This sequence belongs to the ATPase alpha/beta chains family. In terms of assembly, F-type ATPases have 2 components, CF(1) - the catalytic core - and CF(0) - the membrane proton channel. CF(1) has five subunits: alpha(3), beta(3), gamma(1), delta(1), epsilon(1). CF(0) has four main subunits: a(1), b(1), b'(1) and c(9-12).

It localises to the cellular thylakoid membrane. The enzyme catalyses ATP + H2O + 4 H(+)(in) = ADP + phosphate + 5 H(+)(out). In terms of biological role, produces ATP from ADP in the presence of a proton gradient across the membrane. The catalytic sites are hosted primarily by the beta subunits. The polypeptide is ATP synthase subunit beta (Prochlorococcus marinus (strain MIT 9215)).